A 276-amino-acid chain; its full sequence is Glutamate 5-kinase (276 aa).

Lysine 14 is an ATP binding site. Residues serine 54, aspartate 141, and asparagine 157 each coordinate substrate. ATP contacts are provided by residues serine 177–aspartate 178 and threonine 219–lysine 225.

It belongs to the glutamate 5-kinase family.

Its subcellular location is the cytoplasm. The enzyme catalyses L-glutamate + ATP = L-glutamyl 5-phosphate + ADP. The protein operates within amino-acid biosynthesis; L-proline biosynthesis; L-glutamate 5-semialdehyde from L-glutamate: step 1/2. Catalyzes the transfer of a phosphate group to glutamate to form L-glutamate 5-phosphate. This Listeria monocytogenes serovar 1/2a (strain ATCC BAA-679 / EGD-e) protein is Glutamate 5-kinase.